The sequence spans 787 residues: Endonuclease MutS2 (787 aa).

336–343 (GPNTGGKT) lines the ATP pocket. The Smr domain occupies 712 to 787 (LDLRGVRYED…GNGATEVQFK (76 aa)).

This sequence belongs to the DNA mismatch repair MutS family. MutS2 subfamily. As to quaternary structure, homodimer. Binds to stalled ribosomes, contacting rRNA.

Endonuclease that is involved in the suppression of homologous recombination and thus may have a key role in the control of bacterial genetic diversity. Functionally, acts as a ribosome collision sensor, splitting the ribosome into its 2 subunits. Detects stalled/collided 70S ribosomes which it binds and splits by an ATP-hydrolysis driven conformational change. Acts upstream of the ribosome quality control system (RQC), a ribosome-associated complex that mediates the extraction of incompletely synthesized nascent chains from stalled ribosomes and their subsequent degradation. Probably generates substrates for RQC. The chain is Endonuclease MutS2 from Lactiplantibacillus plantarum (strain ATCC BAA-793 / NCIMB 8826 / WCFS1) (Lactobacillus plantarum).